A 956-amino-acid chain; its full sequence is MAM domain-containing glycosylphosphatidylinositol anchor protein 1 (956 aa).

The first 18 residues, M1 to G18, serve as a signal peptide directing secretion. 2 consecutive Ig-like domains span residues P24 to R123 and P132 to T230. N-linked (GlcNAc...) asparagine glycosylation occurs at N42. 2 disulfides stabilise this stretch: C60–C108 and C157–C214. Residues N235, N247, N257, and N307 are each glycosylated (N-linked (GlcNAc...) asparagine). 4 consecutive Ig-like domains span residues P240–N323, P338–N432, P440–Q532, and P539–S650. 2 cysteine pairs are disulfide-bonded: C262-C308 and C357-C415. N432 carries N-linked (GlcNAc...) asparagine glycosylation. Cystine bridges form between C463-C514 and C560-C616. One can recognise a Fibronectin type-III domain in the interval C627–I744. The 168-residue stretch at N752–R919 folds into the MAM domain. Residues L780–N789 show a composition bias toward polar residues. The disordered stretch occupies residues L780 to T799. The GPI-anchor amidated serine moiety is linked to residue S933. Residues G934–R956 constitute a propeptide, removed in mature form.

In terms of assembly, interacts heterophilically through its MAM domain with proteins in axon-rich regions and through its Ig-like domains with proteins in differentiating muscle. Interacts (through the Ig-like domains) with NLGN2. Expressed by neurons in layers 2 and 3 of the cortex during their migration and settling in the cortical plate. Also found in layers 4 and 6a. From 9.5 dpc-13.5 dpc, detected in the marginal zone of the developing cortex. At 16.5 dpc, modest expression is found in the intermediate zone. At postnatal day 1, evident in the superficial cortical plate. By postnatal day 7, expression is limited to layers 2 and 3 throughout most of the cortex.

Its subcellular location is the cell membrane. Required for radial migration of cortical neurons in the superficial layer of the neocortex. Plays a role in the formation or maintenance of inhibitory synapses. May function by inhibiting the activity of NLGN2. The protein is MAM domain-containing glycosylphosphatidylinositol anchor protein 1 of Mus musculus (Mouse).